The sequence spans 384 residues: DNA dC-&gt;dU-editing enzyme APOBEC-3G (384 aa).

The segment at 1-60 is essential for cytoplasmic localization; the sequence is MNPQFRNMVDGMDPHKFSYNFKNRPILSRRNTVWLCYEVKTKGPSRPPLDAKIFRGQVYF. CMP/dCMP-type deaminase domains are found at residues 29–138 and 214–328; these read RRNT…LRSL and GRHE…LRTL. At threonine 32 the chain carries Phosphothreonine; by PKA. Residues histidine 65, cysteine 97, and cysteine 100 each contribute to the Zn(2+) site. The necessary for homooligomerization stretch occupies residues 209 to 336; it reads EPCVEGRHET…TLDEAEAKIS (128 aa). Residues 213 to 215 are interaction with DNA; sequence EGR. Position 218 is a phosphothreonine; by PKA and CAMK2 (threonine 218). Position 257 (histidine 257) interacts with Zn(2+). The active-site Proton donor is glutamate 259. Zn(2+) contacts are provided by cysteine 288 and cysteine 291. Positions 313–320 are interaction with DNA; that stretch reads RIYDDQGR.

Belongs to the cytidine and deoxycytidylate deaminase family. In terms of assembly, homodimer. It depends on Zn(2+) as a cofactor.

The protein resides in the cytoplasm. Its subcellular location is the nucleus. The protein localises to the P-body. The catalysed reaction is a 2'-deoxycytidine in single-stranded DNA + H2O + H(+) = a 2'-deoxyuridine in single-stranded DNA + NH4(+). DNA deaminase (cytidine deaminase) which acts as an inhibitor of retrovirus replication and retrotransposon mobility. After the penetration of retroviral nucleocapsids into target cells of infection and the initiation of reverse transcription, it can induce the conversion of cytosine to uracil in the minus-sense single-strand viral DNA, leading to G-to-A hypermutations in the subsequent plus-strand viral DNA. The resultant detrimental levels of mutations in the proviral genome, along with a deamination-independent mechanism that works prior to the proviral integration, together exert efficient antiretroviral effects in infected target cells. Selectively targets single-stranded DNA and does not deaminate double-stranded DNA or single- or double-stranded RNA. This Pongo pygmaeus (Bornean orangutan) protein is DNA dC-&gt;dU-editing enzyme APOBEC-3G (APOBEC3G).